The primary structure comprises 273 residues: Ribosomal RNA small subunit methyltransferase I (273 aa).

The protein belongs to the methyltransferase superfamily. RsmI family.

Its subcellular location is the cytoplasm. It catalyses the reaction cytidine(1402) in 16S rRNA + S-adenosyl-L-methionine = 2'-O-methylcytidine(1402) in 16S rRNA + S-adenosyl-L-homocysteine + H(+). In terms of biological role, catalyzes the 2'-O-methylation of the ribose of cytidine 1402 (C1402) in 16S rRNA. In Xylella fastidiosa (strain 9a5c), this protein is Ribosomal RNA small subunit methyltransferase I.